A 119-amino-acid polypeptide reads, in one-letter code: Small ribosomal subunit protein uS17 (119 aa).

The segment covering 1 to 21 (MAEAKTGAKATKSAAAGAADG) has biased composition (low complexity). The segment at 1-44 (MAEAKTGAKATKSAAAGAADGASKEKGPKHTPSTPKPRGRRKTR) is disordered.

Belongs to the universal ribosomal protein uS17 family. Part of the 30S ribosomal subunit.

Functionally, one of the primary rRNA binding proteins, it binds specifically to the 5'-end of 16S ribosomal RNA. The sequence is that of Small ribosomal subunit protein uS17 from Mycobacterium marinum (strain ATCC BAA-535 / M).